Consider the following 190-residue polypeptide: Imidazoleglycerol-phosphate dehydratase (190 aa).

The protein belongs to the imidazoleglycerol-phosphate dehydratase family.

The protein localises to the cytoplasm. It carries out the reaction D-erythro-1-(imidazol-4-yl)glycerol 3-phosphate = 3-(imidazol-4-yl)-2-oxopropyl phosphate + H2O. It functions in the pathway amino-acid biosynthesis; L-histidine biosynthesis; L-histidine from 5-phospho-alpha-D-ribose 1-diphosphate: step 6/9. In Sulfurovum sp. (strain NBC37-1), this protein is Imidazoleglycerol-phosphate dehydratase.